A 350-amino-acid chain; its full sequence is Putative ATP-binding protein BRA0745/BS1330_II0738 (350 aa).

An ABC transporter domain is found at 4–234 (VSLRGISKTF…PANKFVAGFI (231 aa)). 36 to 43 (GPSGCGKS) provides a ligand contact to ATP.

It belongs to the ABC transporter superfamily. The complex is composed of two ATP-binding proteins (BRA0745), two transmembrane proteins (BRA0749) and a solute-binding protein (BRA0748).

The protein localises to the cell inner membrane. Its function is as follows. Probably part of an ABC transporter complex. Probably responsible for energy coupling to the transport system. This chain is Putative ATP-binding protein BRA0745/BS1330_II0738, found in Brucella suis biovar 1 (strain 1330).